A 261-amino-acid polypeptide reads, in one-letter code: Glucose 1-dehydrogenase 4 (261 aa).

Position 11–35 (11–35 (VITGGSTGLGRAMAVRFGQEEAKVV)) interacts with NAD(+). A substrate-binding site is contributed by serine 145. The active-site Proton acceptor is tyrosine 158.

Belongs to the short-chain dehydrogenases/reductases (SDR) family. In terms of assembly, homotetramer.

It catalyses the reaction D-glucose + NAD(+) = D-glucono-1,5-lactone + NADH + H(+). The catalysed reaction is D-glucose + NADP(+) = D-glucono-1,5-lactone + NADPH + H(+). The sequence is that of Glucose 1-dehydrogenase 4 (gdhIV) from Priestia megaterium (Bacillus megaterium).